The primary structure comprises 451 residues: Tubulin alpha-1 chain (451 aa).

Gln-11 provides a ligand contact to GTP. Lys-40 is subject to N6-acetyllysine. Residues Glu-71, Thr-145, Thr-179, Asn-206, and Asn-228 each contribute to the GTP site. Glu-71 contributes to the Mg(2+) binding site. The active site involves Glu-254. The disordered stretch occupies residues 429–451; it reads EKDYEEVGAESGEGEEGDEGEEY. The segment covering 431 to 451 has biased composition (acidic residues); the sequence is DYEEVGAESGEGEEGDEGEEY.

Belongs to the tubulin family. Dimer of alpha and beta chains. A typical microtubule is a hollow water-filled tube with an outer diameter of 25 nm and an inner diameter of 15 nM. Alpha-beta heterodimers associate head-to-tail to form protofilaments running lengthwise along the microtubule wall with the beta-tubulin subunit facing the microtubule plus end conferring a structural polarity. Microtubules usually have 13 protofilaments but different protofilament numbers can be found in some organisms and specialized cells. It depends on Mg(2+) as a cofactor. Undergoes a tyrosination/detyrosination cycle, the cyclic removal and re-addition of a C-terminal tyrosine residue by the enzymes tubulin tyrosine carboxypeptidase (TTCP) and tubulin tyrosine ligase (TTL), respectively. In terms of processing, acetylation of alpha chains at Lys-40 stabilizes microtubules and affects affinity and processivity of microtubule motors. This modification has a role in multiple cellular functions, ranging from cell motility, cell cycle progression or cell differentiation to intracellular trafficking and signaling.

Its subcellular location is the cytoplasm. It is found in the cytoskeleton. The enzyme catalyses GTP + H2O = GDP + phosphate + H(+). Its function is as follows. Tubulin is the major constituent of microtubules, a cylinder consisting of laterally associated linear protofilaments composed of alpha- and beta-tubulin heterodimers. Microtubules grow by the addition of GTP-tubulin dimers to the microtubule end, where a stabilizing cap forms. Below the cap, tubulin dimers are in GDP-bound state, owing to GTPase activity of alpha-tubulin. This chain is Tubulin alpha-1 chain (TUBA1), found in Anemia phyllitidis (Fern).